The chain runs to 407 residues: uncharacterized protein (407 aa).

This is an uncharacterized protein from Mycobacterium bovis (strain ATCC BAA-935 / AF2122/97).